The following is a 419-amino-acid chain: Heparan-sulfate 6-O-sulfotransferase 3-B (419 aa).

Topologically, residues 1–7 (MNDKPNK) are cytoplasmic. A helical; Signal-anchor for type II membrane protein membrane pass occupies residues 8–28 (WIFIPILAILFVMIGYQYVCP). Topologically, residues 29–419 (AGGQACHFRT…EDYASQVVRW (391 aa)) are lumenal. A glycan (N-linked (GlcNAc...) asparagine) is linked at Asn-77. A 3'-phosphoadenylyl sulfate-binding site is contributed by 101-109 (HIQKTGGTT). Residues 131-132 (KK), Arg-148, Trp-153, and His-158 each bind substrate. His-158 acts as the Proton acceptor in catalysis. The 3'-phosphoadenylyl sulfate site is built by Arg-191 and Ser-199. Residues His-203 and Trp-210 each contribute to the substrate site. Asn-270 and Asn-275 each carry an N-linked (GlcNAc...) asparagine glycan. 323 to 325 (TQI) provides a ligand contact to 3'-phosphoadenylyl sulfate. Asn-326 carries N-linked (GlcNAc...) asparagine glycosylation. 329 to 330 (RA) is a 3'-phosphoadenylyl sulfate binding site. Asn-393 and Asn-402 each carry an N-linked (GlcNAc...) asparagine glycan.

Belongs to the sulfotransferase 6 family. In early somitogenesis, expressed in presumptive forebrain and midbrain, tail bud and Kupffer's vesicle. During mid-somitogenesis, ubiquitous expression which is strongest in the somites and eye. During late somitogenesis, predominantly expressed in eye, hindbrain and ventral somites. At 24 hours post-fertilization (hpf), restricted to lens and neural retina, brain, otic vesicle and somites. At 36 hpf, brain expression is restricted to telencephalon. At 48 hpf, restricted to telencephalon and pectoral fin.

It localises to the membrane. The catalysed reaction is alpha-D-glucosaminyl-[heparan sulfate](n) + 3'-phosphoadenylyl sulfate = 6-sulfo-alpha-D-glucosaminyl-[heparan sulfate](n) + adenosine 3',5'-bisphosphate + H(+). Functionally, 6-O-sulfation enzyme which catalyzes the transfer of sulfate from 3'-phosphoadenosine 5'-phosphosulfate (PAPS) to position 6 of the N-sulfoglucosamine residue (GlcNS) of heparan sulfate. This chain is Heparan-sulfate 6-O-sulfotransferase 3-B, found in Danio rerio (Zebrafish).